A 392-amino-acid chain; its full sequence is D-amino-acid oxidase 2 (392 aa).

FAD contacts are provided by serine 10, isoleucine 13, arginine 33, aspartate 34, alanine 45, serine 46, glycine 50, and asparagine 52. Anthranilate is bound by residues phenylalanine 56, tyrosine 245, tyrosine 262, and arginine 311. (R)-lactate is bound by residues tyrosine 245, tyrosine 262, and arginine 311. FAD-binding residues include arginine 311, glycine 361, serine 362, glycine 364, and glutamine 366. Residue serine 362 coordinates anthranilate. A (R)-lactate-binding site is contributed by serine 362. Positions 390-392 (AKL) match the Microbody targeting signal motif.

The protein belongs to the DAMOX/DASOX family. The cofactor is FAD.

The protein resides in the peroxisome matrix. It carries out the reaction a D-alpha-amino acid + O2 + H2O = a 2-oxocarboxylate + H2O2 + NH4(+). The enzyme catalyses D-methionine + O2 + H2O = 4-methylsulfanyl-2-oxobutanoate + H2O2 + NH4(+). It catalyses the reaction D-serine + O2 + H2O = 3-hydroxypyruvate + H2O2 + NH4(+). The catalysed reaction is D-histidine + O2 + H2O = 3-(imidazol-5-yl)pyruvate + H2O2 + NH4(+). It carries out the reaction D-proline + O2 = 1-pyrroline-2-carboxylate + H2O2. The enzyme catalyses D-alanine + O2 + H2O = pyruvate + H2O2 + NH4(+). It catalyses the reaction D-leucine + O2 + H2O = 4-methyl-2-oxopentanoate + H2O2 + NH4(+). The catalysed reaction is D-valine + O2 + H2O = 3-methyl-2-oxobutanoate + H2O2 + NH4(+). Functionally, catalyzes the oxidative deamination of D-amino acids with broad substrate specificity. Enables the organism to utilize D-amino acids as a source of nutrients. Enables the organism to utilize D-alanine, D-cysteine, D-histidine, D-leucine, D-methionine, D-phenylalanine, D-proline, D-serine, D-threonine, D-aspartate and D-valine as a nitrogen source and may also contribute to utlization of D-tryptophan, D-tyrosine and D-asparagine as a nitrogen source. Protects the organism from the toxicity of D-amino acids, including from D-alanine. May play a role in its interaction with the host. The polypeptide is D-amino-acid oxidase 2 (Cryptococcus deuterogattii (strain R265) (Cryptococcus gattii VGII (strain R265))).